The chain runs to 174 residues: RNA pyrophosphohydrolase (174 aa).

In terms of domain architecture, Nudix hydrolase spans 6–149 (GYRPNVGIIL…KRDVYLEALK (144 aa)). Residues 38–59 (GGIKPGESPETAMYRELYEEVG) carry the Nudix box motif.

It belongs to the Nudix hydrolase family. RppH subfamily. Requires a divalent metal cation as cofactor.

Functionally, accelerates the degradation of transcripts by removing pyrophosphate from the 5'-end of triphosphorylated RNA, leading to a more labile monophosphorylated state that can stimulate subsequent ribonuclease cleavage. This is RNA pyrophosphohydrolase from Neisseria gonorrhoeae (strain ATCC 700825 / FA 1090).